The primary structure comprises 740 residues: NAD(P)H-quinone oxidoreductase subunit 5, chloroplastic (740 aa).

A run of 16 helical transmembrane segments spans residues 9-29, 40-60, 89-109, 125-145, 147-167, 185-205, 219-239, 258-278, 286-306, 327-347, 354-374, 396-416, 425-445, 543-563, 602-622, and 717-737; these read WIIPFIPLPVPMLIGAGLILF, WAFQSVLLLSIVMIFSIYLSI, IDPLTSIMSILITTVGIMVLI, FAYMSFFSTSMLGLVTSSNLI, IYIFWELVGLCSYLLIGFWFT, GDFGLLLGILGFYWITGSFEF, NEVNFLFVTLCAVLLFAGAVS, TPISALIHAATMVAAGIFLVA, VIPYIMYLISVIGIITVLLGA, LGYMMLALGMGSYRSALFHLI, ALLFLGSGSIIHSMETIVGYS, ITFLLGTLSLCGIPPLACFWS, WLYSPIFAIIAWATAGLTAFY, LFPIFVLGLFTLFVGAIGIPF, VVSVSIAYFGIFIASFLYKPV, and SYLFLYLAYVSVFLLVYYLLF.

The protein belongs to the complex I subunit 5 family. NDH is composed of at least 16 different subunits, 5 of which are encoded in the nucleus.

It localises to the plastid. It is found in the chloroplast thylakoid membrane. The catalysed reaction is a plastoquinone + NADH + (n+1) H(+)(in) = a plastoquinol + NAD(+) + n H(+)(out). It carries out the reaction a plastoquinone + NADPH + (n+1) H(+)(in) = a plastoquinol + NADP(+) + n H(+)(out). NDH shuttles electrons from NAD(P)H:plastoquinone, via FMN and iron-sulfur (Fe-S) centers, to quinones in the photosynthetic chain and possibly in a chloroplast respiratory chain. The immediate electron acceptor for the enzyme in this species is believed to be plastoquinone. Couples the redox reaction to proton translocation, and thus conserves the redox energy in a proton gradient. In Solanum bulbocastanum (Wild potato), this protein is NAD(P)H-quinone oxidoreductase subunit 5, chloroplastic (ndhF).